The chain runs to 348 residues: Histidinol-phosphate aminotransferase (348 aa).

Lys210 is subject to N6-(pyridoxal phosphate)lysine.

The protein belongs to the class-II pyridoxal-phosphate-dependent aminotransferase family. Histidinol-phosphate aminotransferase subfamily. As to quaternary structure, homodimer. It depends on pyridoxal 5'-phosphate as a cofactor.

It carries out the reaction L-histidinol phosphate + 2-oxoglutarate = 3-(imidazol-4-yl)-2-oxopropyl phosphate + L-glutamate. Its pathway is amino-acid biosynthesis; L-histidine biosynthesis; L-histidine from 5-phospho-alpha-D-ribose 1-diphosphate: step 7/9. In Pseudomonas putida (strain W619), this protein is Histidinol-phosphate aminotransferase.